Reading from the N-terminus, the 380-residue chain is Tryptophan--tRNA ligase 2 (380 aa).

The short motif at 74–82 (PSGPMHLGH) is the 'HIGH' region element. Residues 249–253 (KMSSS) carry the 'KMSKS' region motif.

This sequence belongs to the class-I aminoacyl-tRNA synthetase family.

Its subcellular location is the cytoplasm. The enzyme catalyses tRNA(Trp) + L-tryptophan + ATP = L-tryptophyl-tRNA(Trp) + AMP + diphosphate + H(+). The chain is Tryptophan--tRNA ligase 2 from Halobacterium salinarum (strain ATCC 700922 / JCM 11081 / NRC-1) (Halobacterium halobium).